The sequence spans 128 residues: Aspartate 1-decarboxylase (128 aa).

S25 (schiff-base intermediate with substrate; via pyruvic acid) is an active-site residue. The residue at position 25 (S25) is a Pyruvic acid (Ser). T57 contacts substrate. The Proton donor role is filled by Y58. Position 73 to 75 (73 to 75 (GAA)) interacts with substrate.

The protein belongs to the PanD family. As to quaternary structure, heterooctamer of four alpha and four beta subunits. Pyruvate is required as a cofactor. Post-translationally, is synthesized initially as an inactive proenzyme, which is activated by self-cleavage at a specific serine bond to produce a beta-subunit with a hydroxyl group at its C-terminus and an alpha-subunit with a pyruvoyl group at its N-terminus.

The protein localises to the cytoplasm. The enzyme catalyses L-aspartate + H(+) = beta-alanine + CO2. It participates in cofactor biosynthesis; (R)-pantothenate biosynthesis; beta-alanine from L-aspartate: step 1/1. Functionally, catalyzes the pyruvoyl-dependent decarboxylation of aspartate to produce beta-alanine. The sequence is that of Aspartate 1-decarboxylase from Chlorobium limicola (strain DSM 245 / NBRC 103803 / 6330).